Reading from the N-terminus, the 348-residue chain is Protein RecA (348 aa).

ATP is bound at residue 64–71 (GPESSGKT). A compositionally biased stretch (basic and acidic residues) spans 325–335 (YEIDGSSKEPL). Positions 325–348 (YEIDGSSKEPLDEKEETLSLLDDE) are disordered.

The protein belongs to the RecA family.

It localises to the cytoplasm. Can catalyze the hydrolysis of ATP in the presence of single-stranded DNA, the ATP-dependent uptake of single-stranded DNA by duplex DNA, and the ATP-dependent hybridization of homologous single-stranded DNAs. It interacts with LexA causing its activation and leading to its autocatalytic cleavage. The protein is Protein RecA of Listeria monocytogenes serotype 1/2a (strain 10403S).